We begin with the raw amino-acid sequence, 461 residues long: L-seryl-tRNA(Sec) selenium transferase (461 aa).

N6-(pyridoxal phosphate)lysine is present on K294.

The protein belongs to the SelA family. Pyridoxal 5'-phosphate is required as a cofactor.

It is found in the cytoplasm. It catalyses the reaction L-seryl-tRNA(Sec) + selenophosphate + H(+) = L-selenocysteinyl-tRNA(Sec) + phosphate. It functions in the pathway aminoacyl-tRNA biosynthesis; selenocysteinyl-tRNA(Sec) biosynthesis; selenocysteinyl-tRNA(Sec) from L-seryl-tRNA(Sec) (bacterial route): step 1/1. Converts seryl-tRNA(Sec) to selenocysteinyl-tRNA(Sec) required for selenoprotein biosynthesis. The chain is L-seryl-tRNA(Sec) selenium transferase from Haemophilus influenzae (strain PittEE).